A 123-amino-acid chain; its full sequence is Ribosome-binding factor A (123 aa).

Belongs to the RbfA family. Monomer. Binds 30S ribosomal subunits, but not 50S ribosomal subunits or 70S ribosomes.

The protein resides in the cytoplasm. Its function is as follows. One of several proteins that assist in the late maturation steps of the functional core of the 30S ribosomal subunit. Associates with free 30S ribosomal subunits (but not with 30S subunits that are part of 70S ribosomes or polysomes). Required for efficient processing of 16S rRNA. May interact with the 5'-terminal helix region of 16S rRNA. In Chlorobium chlorochromatii (strain CaD3), this protein is Ribosome-binding factor A.